A 154-amino-acid chain; its full sequence is Transcriptional repressor NrdR (154 aa).

A zinc finger lies at 3–34 (CPYCRHPDSRVVDSREADDGQLIRRRRSCPEC). In terms of domain architecture, ATP-cone spans 46–136 (LAVVKRSGVT…VYRSFESLAD (91 aa)).

The protein belongs to the NrdR family. Requires Zn(2+) as cofactor.

Its function is as follows. Negatively regulates transcription of bacterial ribonucleotide reductase nrd genes and operons by binding to NrdR-boxes. The sequence is that of Transcriptional repressor NrdR from Salinispora tropica (strain ATCC BAA-916 / DSM 44818 / JCM 13857 / NBRC 105044 / CNB-440).